Reading from the N-terminus, the 1389-residue chain is CRISPR-associated endoribonuclease Cas13a (1389 aa).

The tract at residues 1 to 347 (MGNLFGHKRW…DKHEKFKIER (347 aa)) is NTD. R219 lines the crRNA pocket. Binds crRNA stretches follow at residues 330–342 (YIKS…KHEK), 405–408 (KKHY), and 432–436 (YRYLK). The helical-1 stretch occupies residues 348–498 (ENKKDKIVKF…KLRHNDIDMT (151 aa)). Active-site for pre-crRNA processing residues include R438 and K441. K441 lines the crRNA pocket. Residues 471–475 (KILKR) are binds crRNA. K489 is a binding site for crRNA. An HEPN-like fold 1-I region spans residues 499 to 636 (TVNTDDFSRL…LKISDEEVSK (138 aa)). The interval 502-509 (TDDFSRLH) is binds crRNA. Catalysis depends on for target ssRNA cleavage residues R597 and H602. Residues 637-828 (ALNLDVVFKD…ERITVKTSDK (192 aa)) are helical-2. Q759 is a binding site for crRNA. Residues 829–899 (TIVINDDFEY…ECITENWNLN (71 aa)) form an HEPN-like fold 1-II region. The tract at residues 853–858 (NKIRNR) is binds crRNA. Residue W865 participates in crRNA binding. 3 coiled-coil regions span residues 893–920 (TENW…FKIQ), 968–1046 (EIDK…FQEI), and 1101–1131 (KNKI…KYIK). The interval 900 to 1170 (LEEFIQKMKE…EYKKIRDLVE (271 aa)) is linker. An HEPN-like fold 2 region spans residues 1170 to 1290 (EFNYLNKIES…ISHFYIVRNP (121 aa)). Active-site for target ssRNA cleavage residues include R1278 and H1283. Binds crRNA regions lie at residues 1311 to 1316 (TRYNNS) and 1338 to 1339 (KK).

Belongs to the CRISPR-associated endoribonuclease Cas13a family. As to quaternary structure, monomer. It depends on Mg(2+) as a cofactor.

With respect to regulation, RNase activity on target is decreased by EDTA. Target RNA acts as an activator for non-specific ssRNA degradation. CRISPR (clustered regularly interspaced short palindromic repeat), is an adaptive immune system that provides protection against mobile genetic elements (viruses, transposable elements and conjugative plasmids). CRISPR clusters contain sequences complementary to antecedent mobile elements (spacers) and target invading nucleic acids. Unlike many single-component effectors, this CRISPR-Cas system targets RNA. CRISPR clusters are transcribed from pre-CRISPR RNA (crRNA) and processed into crRNA (optimally 28 nucleotides in this system) by this protein. This protein processes pre-crRNA at a 'non-typical' site 1 nucleotide upstream of the pre-crRNA stem-loop; it cleaves pre-crRNA from L.buccalis and L.wadei in a similar fashion, whereas the enzymes from the latter 2 bacteria cleave their own pre-crRNA 3 nt further upstream. When the appropriate target sequences are cloned into the CRISPR array, confers immunity to ssRNA(+) enterobacteria phage MS2. Cleaves linear target ssRNA in a crRNA-dependent fashion, preferentially before U residues; has no activity on partially dsRNA, ssDNA or dsDNA. RNA secondary structure surrounding the target influence the cleavage site and efficiency; unlike other CRISPR-Cas effectors Cas13a cleaves outside of the crRNA binding site. In the presence of a viable RNA target other RNAs are also degraded (called collateral RNA degradation), suggesting this type of CRISPR-Cas might also prevent viral spread by inducing programmed cell death or dormancy. This system has a 3' protospacer flanking site (PFS), it does not cleave when the 3' PFS is G (PFS is equivalent to PAM, the protospacer adjacent motif). Mutations of its active site residues results in an RNA-programmed RNA-binding protein. The protein is CRISPR-associated endoribonuclease Cas13a of Leptotrichia shahii (strain DSM 19757 / CCUG 47503 / CIP 107916 / JCM 16776 / LB37).